Consider the following 294-residue polypeptide: Signal peptidase I (294 aa).

The segment at 1–59 (MTETTDSPSERQPGPAEPELSSRDPDIAGQVFDAAPFDAAPDADSEGDSKAAKTDEPRP) is disordered. Over 1 to 66 (MTETTDSPSE…PRPAKRSTLR (66 aa)) the chain is Cytoplasmic. A compositionally biased stretch (basic and acidic residues) spans 47–59 (GDSKAAKTDEPRP). Residues 67–87 (EFAVLAVIAVVLYYVMLTFVA) form a helical membrane-spanning segment. The Extracellular segment spans residues 88–294 (RPYLIPSESM…VRSVNPQQGR (207 aa)). Catalysis depends on residues serine 96 and lysine 174.

This sequence belongs to the peptidase S26 family.

It localises to the cell membrane. It catalyses the reaction Cleavage of hydrophobic, N-terminal signal or leader sequences from secreted and periplasmic proteins.. The polypeptide is Signal peptidase I (lepB) (Mycobacterium tuberculosis (strain CDC 1551 / Oshkosh)).